The primary structure comprises 295 residues: Adrenocorticotropic hormone receptor (295 aa).

The Extracellular portion of the chain corresponds to M1 to A23. N-linked (GlcNAc...) asparagine glycosylation is found at N12 and N17. Cystine bridges form between C21–C253 and C245–C251. A helical transmembrane segment spans residues V24–V49. The Cytoplasmic portion of the chain corresponds to A50 to P58. Residues M59–L79 traverse the membrane as a helical segment. The Extracellular portion of the chain corresponds to E80 to D104. Residues V105–A126 traverse the membrane as a helical segment. At D127–A147 the chain is on the cytoplasmic side. A helical membrane pass occupies residues L148–F168. Residues S169–A180 are Extracellular-facing. Residues L181–L199 form a helical membrane-spanning segment. Topologically, residues A200–G217 are cytoplasmic. Residues A218 to F244 form a helical membrane-spanning segment. At C245–S256 the chain is on the extracellular side. Residues L257–F278 form a helical membrane-spanning segment. Topologically, residues R279–W295 are cytoplasmic. Residue C293 is the site of S-palmitoyl cysteine attachment.

It belongs to the G-protein coupled receptor 1 family. Homodimer. Interacts with corticotropin (ACTH). Interacts with MRAP; this interaction targets MC2R to the plasma membrane. Interacts with MRAP2; competing with MRAP for binding to MC2R and impairing the binding of corticotropin (ACTH). Post-translationally, ubiquitinated by MGRN1 that may be involved in post-endocytic trafficking and/or degradation of internalized receptor.

The protein localises to the cell membrane. Hormone receptor primarily expressed in adrenal cortex that plays a key role in regulating adrenocortical function. Upon corticotropin (ACTH) binding, facilitates the release of adrenal glucocorticoids, including cortisol and corticosterone. In addition, MC2R is required for fetal and neonatal adrenal gland development. Mechanistically, activates adenylate cyclase (cAMP), the MAPK cascade as well as the cAMP-dependent protein kinase A pathway leading to steroidogenic factor 1/NR5A1-mediated transcriptional activation. This Ovis aries (Sheep) protein is Adrenocorticotropic hormone receptor (MC2R).